The chain runs to 365 residues: Putative clathrin assembly protein At4g40080 (365 aa).

The ENTH domain maps to 29–167 (NTKSKTLSFH…STSRIMGFFI (139 aa)).

Its subcellular location is the membrane. The protein resides in the clathrin-coated pit. It localises to the golgi apparatus. The protein localises to the cytoplasmic vesicle. It is found in the clathrin-coated vesicle. This is Putative clathrin assembly protein At4g40080 from Arabidopsis thaliana (Mouse-ear cress).